The chain runs to 889 residues: Cytoplasmic aconitate hydratase (889 aa).

Substrate-binding positions include Gln86 and 205 to 207 (DSH). Residues Cys437, Cys503, and Cys506 each contribute to the [4Fe-4S] cluster site. Substrate contacts are provided by residues Arg536, Arg541, Arg699, and 779 to 780 (SR).

This sequence belongs to the aconitase/IPM isomerase family. In terms of assembly, interacts (when associated with the 4Fe-4S) with FBXL5. Interacts with frataxin(81-210). It depends on [4Fe-4S] cluster as a cofactor.

It is found in the cytoplasm. The protein localises to the cytosol. The enzyme catalyses citrate = D-threo-isocitrate. Functionally, bifunctional iron sensor that switches between 2 activities depending on iron availability. Iron deprivation, promotes its mRNA binding activity through which it regulates the expression of genes involved in iron uptake, sequestration and utilization. Binds to iron-responsive elements (IRES) in the untranslated region of target mRNAs preventing for instance the translation of ferritin and aminolevulinic acid synthase and stabilizing the transferrin receptor mRNA. Conversely, when cellular iron levels are high, binds a 4Fe-4S cluster which precludes RNA binding activity and promotes the aconitase activity, the isomerization of citrate to isocitrate via cis-aconitate. This Rattus norvegicus (Rat) protein is Cytoplasmic aconitate hydratase (Aco1).